Consider the following 387-residue polypeptide: MLQRIYLDNNATTRIDPKVKEIMDPFLRDHYGNPSSLHQFGTETHPAIAEALDKLYKGINARDIDDVIITSCATESNNWVLKGVYFDECLKKGKNHIVTTVTEHPAVRSTCNFLESLGVEVTYLPINEHGSITAEQVKEAITEKTALVSVMWANNETGLIFPIEEIGAICKEKGVLFHTDAVQAIGKIPVDVLKANVDFLSFSAHKFHGPKGIGGLYIRSGVGLTPLFHGGEHMNGRRSGTLNVPYIVGMGEAMKLAVEHLDYEKEVVGKLRDKLEEALLKIPDVMVVGDRIHRVPNTTLISVRGIEGEAMLWDLNRSNIAASTGSACASEDLEANPVMVAIGASKELAHTAIRLSLSRFNTEAEIDKTIEVFSQAATRLRNISSSY.

Pyridoxal 5'-phosphate contacts are provided by residues 73–74 (AT), N155, Q183, and 203–205 (SAH). Residue K206 is modified to N6-(pyridoxal phosphate)lysine. Pyridoxal 5'-phosphate is bound at residue T241. The active-site Cysteine persulfide intermediate is the C328. C328 lines the [2Fe-2S] cluster pocket.

The protein belongs to the class-V pyridoxal-phosphate-dependent aminotransferase family. NifS/IscS subfamily. Homodimer. Forms a heterotetramer with IscU, interacts with other sulfur acceptors. Requires pyridoxal 5'-phosphate as cofactor.

It is found in the cytoplasm. It catalyses the reaction (sulfur carrier)-H + L-cysteine = (sulfur carrier)-SH + L-alanine. The protein operates within cofactor biosynthesis; iron-sulfur cluster biosynthesis. Master enzyme that delivers sulfur to a number of partners involved in Fe-S cluster assembly, tRNA modification or cofactor biosynthesis. Catalyzes the removal of elemental sulfur atoms from cysteine to produce alanine. Functions as a sulfur delivery protein for Fe-S cluster synthesis onto IscU, an Fe-S scaffold assembly protein, as well as other S acceptor proteins. The protein is Cysteine desulfurase IscS of Helicobacter pylori (strain Shi470).